Here is a 193-residue protein sequence, read N- to C-terminus: MASYLTLFISAVVVNNYVLTRFLGLCIFFGVSKNLNASVGMGMAVTSVITMSSILAWVVYHFVLIPFNLTFLKTVVFVLLIASFVQLLETIIKKQAPALYNMWGIYLLLIATNCIVLAVPILNADSNFNFLQSVVNAIGSGLGFAMAIILMASLREKLRLADVPKPLEGLGVAFILAGMLALAFLGFSGMISI.

The next 6 helical transmembrane spans lie at 11-31, 39-59, 62-82, 102-122, 134-154, and 171-191; these read AVVV…FFGV, VGMG…AWVV, FVLI…LLIA, MWGI…VPIL, VVNA…MASL, and GVAF…SGMI.

Belongs to the NqrDE/RnfAE family. The complex is composed of six subunits: RnfA, RnfB, RnfC, RnfD, RnfE and RnfG.

Its subcellular location is the cell membrane. Its function is as follows. Part of a membrane-bound complex that couples electron transfer with translocation of ions across the membrane. Couples electron transfer from reduced ferredoxin to NAD(+) with translocation of H(+) out of the cell. Essential for energy conservation during autotrophic growth. Contributes to ATP synthesis during heterotrophic growth. The polypeptide is Proton-translocating ferredoxin:NAD(+) oxidoreductase complex subunit A (Clostridium ljungdahlii (strain ATCC 55383 / DSM 13528 / PETC)).